The primary structure comprises 569 residues: Glutamate--tRNA ligase (569 aa).

The short motif at Pro108–Ser118 is the 'HIGH' region element.

Belongs to the class-I aminoacyl-tRNA synthetase family. Glutamate--tRNA ligase type 2 subfamily.

Its subcellular location is the cytoplasm. It carries out the reaction tRNA(Glu) + L-glutamate + ATP = L-glutamyl-tRNA(Glu) + AMP + diphosphate. Catalyzes the attachment of glutamate to tRNA(Glu) in a two-step reaction: glutamate is first activated by ATP to form Glu-AMP and then transferred to the acceptor end of tRNA(Glu). The sequence is that of Glutamate--tRNA ligase from Thermofilum pendens (strain DSM 2475 / Hrk 5).